Reading from the N-terminus, the 883-residue chain is MNEQYSALRSNVSMLGKVLGETIKDALGEHILDRVETIRKLSKSSRAGNEANRQELLTTLQNLSNDELLPVARAFSQFLNLANTAEQYHSISPKGEAASNPEVIARTLRKLKNQPDLNDATIKKAVESLSLELVLTAHPTEITRRTLIHKMGEINNCLKQLDNTDIADYERHQVMRRLRQLIAQSWHTDEIRKQRPSPVDEAKWGFAVVENSLWQGVPNYLRELNEQLEENLGYKLPVDFVPVRFTSWMGGDRDGNPNVTADITRHVLLLSRWKATDLFLKDIHVLVSELSMVDATPELLALVGEEGASEPYRYLMKKLRARLMATQSWLEARLKGEKLPKPDGLLTQNEQLWEPLYACYQSLQACGMGIIANGELLDTLRRVKCFGVPLVRIDIRQESTRHTEALGEITRYLGIGDYESWSEADKQAFLIRELNSKRPLLPRNWEPSNDTREVLETCKVIAEAPKGSIAAYVISMAKTPSDVLAVHLLLKEAGIGFAMPVAPLFETLDDLNNADDVMTQLLNIDWYRGLIQGKQMVMIGYSDSAKDAGVMAASWAQYQAQDALIKTCEKAGIELTLFHGRGGSIGRGGAPAHAALLSQPPGSLKGGLRVTEQGEMIRFKYGLPEVTVSSLSLYTSAILEANLLPPPEPKDSWRHIMDELSVISCETYRGYVRENKDFVPYFRSATPEQELGKLPLGSRPAKRRPTGGVESLRAIPWIFAWTQNRLMLPAWLGAGTALQKVVEDGKQSELEAMCRDWPFFSTRLGMLEMVFSKADLWLADYYDQRLVAKTLWPLGKELRDLLEEDIKVVLAIANDSHLMADLPWIAESIQLRNVYTDPLNVLQAELLYRSRLTEEQGKSPDPRVEQALMVTIAGVAAGMRNTG.

Active-site residues include H138 and K546.

The protein belongs to the PEPCase type 1 family. Requires Mg(2+) as cofactor.

The enzyme catalyses oxaloacetate + phosphate = phosphoenolpyruvate + hydrogencarbonate. Its function is as follows. Forms oxaloacetate, a four-carbon dicarboxylic acid source for the tricarboxylic acid cycle. In Salmonella schwarzengrund (strain CVM19633), this protein is Phosphoenolpyruvate carboxylase.